The following is a 474-amino-acid chain: Nitric oxide reductase subunit B (474 aa).

A helical membrane pass occupies residues 19 to 39; it reads YFVFALILFVGQVLFGLIMGL. Histidine 60 is a heme b binding site. 8 helical membrane-spanning segments follow: residues 61–81, 95–115, 145–165, 169–189, 207–227, 243–263, 270–290, and 308–328; these read TNLL…YLIP, IILF…YLFV, IGIV…MLKG, VVST…LFAF, HLWV…FVLI, VIIA…FFWI, LWVG…MVLF, and SLWA…WGFM. Fe cation is bound by residues histidine 207, histidine 258, and histidine 259. Histidine 347 and histidine 349 together coordinate heme b. 3 helical membrane-spanning segments follow: residues 348-368, 390-410, and 433-453; these read GHLA…SYAM, FWLM…AGVV, and LAIF…GLVC.

This sequence belongs to the heme-copper respiratory oxidase family. In terms of assembly, heterodimer of cytochromes b (large subunit) and c (small subunit).

The protein localises to the cell membrane. The catalysed reaction is nitrous oxide + 2 Fe(III)-[cytochrome c] + H2O = 2 nitric oxide + 2 Fe(II)-[cytochrome c] + 2 H(+). Its pathway is nitrogen metabolism; nitrate reduction (denitrification); dinitrogen from nitrate: step 3/4. In terms of biological role, component of the anaerobic respiratory chain that transforms nitrate to dinitrogen (denitrification). NorB is the catalytic subunit of the enzyme complex. Shows proton pump activity across the membrane in denitrifying bacterial cells. The mononitrogen reduction is probably coupled to electron transport phosphorylation. The chain is Nitric oxide reductase subunit B (norB) from Stutzerimonas stutzeri (Pseudomonas stutzeri).